A 523-amino-acid polypeptide reads, in one-letter code: Tyrosine ammonia-lyase (523 aa).

Tyr-60 functions as the Proton donor/acceptor in the catalytic mechanism. A substrate-binding site is contributed by His-89. The 5-imidazolinone (Ala-Gly) cross-link spans 149–151 (ASG). A 2,3-didehydroalanine (Ser) modification is found at Ser-150. Substrate is bound by residues Arg-303 and 432-436 (NAANQ).

It belongs to the PAL/histidase family. As to quaternary structure, homotetramer. Post-translationally, contains an active site 4-methylidene-imidazol-5-one (MIO), which is formed autocatalytically by cyclization and dehydration of residues Ala-Ser-Gly.

The catalysed reaction is L-tyrosine = (E)-4-coumarate + NH4(+). Functionally, catalyzes the non-oxidative deamination of L-tyrosine. Has very low phenylalanine ammonia-lyase activity (in vitro). In Cereibacter sphaeroides (strain ATCC 17023 / DSM 158 / JCM 6121 / CCUG 31486 / LMG 2827 / NBRC 12203 / NCIMB 8253 / ATH 2.4.1.) (Rhodobacter sphaeroides), this protein is Tyrosine ammonia-lyase (hutH).